Reading from the N-terminus, the 82-residue chain is Small ribosomal subunit protein bS18 (82 aa).

It belongs to the bacterial ribosomal protein bS18 family. As to quaternary structure, part of the 30S ribosomal subunit. Forms a tight heterodimer with protein bS6.

Binds as a heterodimer with protein bS6 to the central domain of the 16S rRNA, where it helps stabilize the platform of the 30S subunit. The polypeptide is Small ribosomal subunit protein bS18 (Chlamydia felis (strain Fe/C-56) (Chlamydophila felis)).